We begin with the raw amino-acid sequence, 177 residues long: Large ribosomal subunit protein uL6 (177 aa).

This sequence belongs to the universal ribosomal protein uL6 family. In terms of assembly, part of the 50S ribosomal subunit.

Its function is as follows. This protein binds to the 23S rRNA, and is important in its secondary structure. It is located near the subunit interface in the base of the L7/L12 stalk, and near the tRNA binding site of the peptidyltransferase center. In Rickettsia africae (strain ESF-5), this protein is Large ribosomal subunit protein uL6.